A 473-amino-acid polypeptide reads, in one-letter code: UDP-N-acetylmuramate--L-alanine ligase (473 aa).

An ATP-binding site is contributed by 123–129 (GSHGKTS).

The protein belongs to the MurCDEF family.

It is found in the cytoplasm. The catalysed reaction is UDP-N-acetyl-alpha-D-muramate + L-alanine + ATP = UDP-N-acetyl-alpha-D-muramoyl-L-alanine + ADP + phosphate + H(+). The protein operates within cell wall biogenesis; peptidoglycan biosynthesis. Functionally, cell wall formation. This is UDP-N-acetylmuramate--L-alanine ligase from Prochlorococcus marinus subsp. pastoris (strain CCMP1986 / NIES-2087 / MED4).